The sequence spans 426 residues: Histidine--tRNA ligase (426 aa).

It belongs to the class-II aminoacyl-tRNA synthetase family. In terms of assembly, homodimer.

The protein localises to the cytoplasm. The enzyme catalyses tRNA(His) + L-histidine + ATP = L-histidyl-tRNA(His) + AMP + diphosphate + H(+). This Streptococcus pyogenes serotype M6 (strain ATCC BAA-946 / MGAS10394) protein is Histidine--tRNA ligase.